The chain runs to 293 residues: AM-toxin biosynthesis protein 14 (293 aa).

5 consecutive transmembrane segments (helical) span residues Ser-33–Ile-53, Ile-73–Leu-93, Gly-148–Trp-168, Leu-183–Leu-203, and Val-221–Thr-241.

Its subcellular location is the membrane. The protein operates within mycotoxin biosynthesis. In terms of biological role, part of the gene clusters that mediate the biosynthesis of AM-toxins, host-selective toxins (HSTs) causing Alternaria blotch on apple, a worldwide distributed disease. AM-toxins are cyclic depsipeptides containing the 3 residues 2-hydroxy-isovaleric acid (2-HIV), dehydroalanine, L-alanine which are common for all 3 AM-toxins I to III. The fourth precursor is L-alpha-amino-methoxyphenyl-valeric acid (L-Amv) for AM-toxin I, L-alpha-amino-phenyl-valeric acid (L-Apv) for AM-toxin II, and L-alpha-amino-hydroxyphenyl-valeric acid (L-Ahv) for AM-toxin III. AM-toxins have two target sites for affecting susceptible apple cells; they cause invagination of the plasma membrane and electrolyte loss and chloroplast disorganization. The non-ribosomal peptide synthetase AMT1 contains 4 catalytic modules and is responsible for activation of each residue in AM-toxin. The aldo-keto reductase AMT2 catalyzes the conversion of 2-keto-isovaleric acid (2-KIV) to 2-hydroxy-isovaleric acid (2-HIV), one of the precursor residues incorporated by AMT1 during AM-toxin biosynthesis, by reduction of its ketone to an alcohol. The cytochrome P450 monooxygenase AMT3 and the thioesterase AMT4 are also important for AM-toxin production, but their exact function within the AM-toxin biosynthesis are not known yet. Up to 21 proteins (including AMT1 to AMT4) are predicted to be involved in AM-toxin biosynthesis since their expression ishighly up-regulated in AM-toxin-producing cultures. The polypeptide is AM-toxin biosynthesis protein 14 (Alternaria alternata (Alternaria rot fungus)).